We begin with the raw amino-acid sequence, 297 residues long: Acetyl-coenzyme A carboxylase carboxyl transferase subunit beta (297 aa).

The CoA carboxyltransferase N-terminal domain occupies 25–294 (LWVKCPETGQ…LPPKGRLPRP (270 aa)).

This sequence belongs to the AccD/PCCB family. As to quaternary structure, acetyl-CoA carboxylase is a heterohexamer composed of biotin carboxyl carrier protein (AccB), biotin carboxylase (AccC) and two subunits each of ACCase subunit alpha (AccA) and ACCase subunit beta (AccD).

It localises to the cytoplasm. The catalysed reaction is N(6)-carboxybiotinyl-L-lysyl-[protein] + acetyl-CoA = N(6)-biotinyl-L-lysyl-[protein] + malonyl-CoA. It functions in the pathway lipid metabolism; malonyl-CoA biosynthesis; malonyl-CoA from acetyl-CoA: step 1/1. Its function is as follows. Component of the acetyl coenzyme A carboxylase (ACC) complex. Biotin carboxylase (BC) catalyzes the carboxylation of biotin on its carrier protein (BCCP) and then the CO(2) group is transferred by the transcarboxylase to acetyl-CoA to form malonyl-CoA. This is Acetyl-coenzyme A carboxylase carboxyl transferase subunit beta from Xanthobacter autotrophicus (strain ATCC BAA-1158 / Py2).